Consider the following 493-residue polypeptide: Glutamate--tRNA ligase (493 aa).

Positions 10-20 (PSPTGDPHVGT) match the 'HIGH' region motif. The short motif at 251–255 (KLSKR) is the 'KMSKS' region element. An ATP-binding site is contributed by Lys-254.

This sequence belongs to the class-I aminoacyl-tRNA synthetase family. Glutamate--tRNA ligase type 1 subfamily. Monomer.

The protein resides in the cytoplasm. The catalysed reaction is tRNA(Glu) + L-glutamate + ATP = L-glutamyl-tRNA(Glu) + AMP + diphosphate. Catalyzes the attachment of glutamate to tRNA(Glu) in a two-step reaction: glutamate is first activated by ATP to form Glu-AMP and then transferred to the acceptor end of tRNA(Glu). This chain is Glutamate--tRNA ligase, found in Pseudomonas putida (strain W619).